Reading from the N-terminus, the 150-residue chain is D-aminoacyl-tRNA deacylase (150 aa).

The Gly-cisPro motif, important for rejection of L-amino acids motif lies at glycine 137–proline 138.

The protein belongs to the DTD family. In terms of assembly, homodimer.

The protein localises to the cytoplasm. The catalysed reaction is glycyl-tRNA(Ala) + H2O = tRNA(Ala) + glycine + H(+). It catalyses the reaction a D-aminoacyl-tRNA + H2O = a tRNA + a D-alpha-amino acid + H(+). Its function is as follows. An aminoacyl-tRNA editing enzyme that deacylates mischarged D-aminoacyl-tRNAs. Also deacylates mischarged glycyl-tRNA(Ala), protecting cells against glycine mischarging by AlaRS. Acts via tRNA-based rather than protein-based catalysis; rejects L-amino acids rather than detecting D-amino acids in the active site. By recycling D-aminoacyl-tRNA to D-amino acids and free tRNA molecules, this enzyme counteracts the toxicity associated with the formation of D-aminoacyl-tRNA entities in vivo and helps enforce protein L-homochirality. The protein is D-aminoacyl-tRNA deacylase of Listeria monocytogenes serotype 4b (strain CLIP80459).